The following is an 86-amino-acid chain: uncharacterized protein (86 aa).

This is an uncharacterized protein from Psittacid herpesvirus 1 (isolate Amazon parrot/-/97-0001/1997) (PsHV-1).